The sequence spans 337 residues: RNA 3'-terminal phosphate cyclase (337 aa).

ATP contacts are provided by residues Gln-101 and His-282–Asp-285. His-306 functions as the Tele-AMP-histidine intermediate in the catalytic mechanism.

This sequence belongs to the RNA 3'-terminal cyclase family. Type 1 subfamily.

It localises to the cytoplasm. It catalyses the reaction a 3'-end 3'-phospho-ribonucleotide-RNA + ATP = a 3'-end 2',3'-cyclophospho-ribonucleotide-RNA + AMP + diphosphate. In terms of biological role, catalyzes the conversion of 3'-phosphate to a 2',3'-cyclic phosphodiester at the end of RNA. The mechanism of action of the enzyme occurs in 3 steps: (A) adenylation of the enzyme by ATP; (B) transfer of adenylate to an RNA-N3'P to produce RNA-N3'PP5'A; (C) and attack of the adjacent 2'-hydroxyl on the 3'-phosphorus in the diester linkage to produce the cyclic end product. The biological role of this enzyme is unknown but it is likely to function in some aspects of cellular RNA processing. The sequence is that of RNA 3'-terminal phosphate cyclase from Saccharolobus islandicus (strain L.S.2.15 / Lassen #1) (Sulfolobus islandicus).